The sequence spans 864 residues: Translation initiation factor IF-2 (864 aa).

Basic and acidic residues predominate over residues 140–171 (DSRSLNTKKENKLKISNKDEQNKKFNQHRESN). The segment at 140–179 (DSRSLNTKKENKLKISNKDEQNKKFNQHRESNSFDLNHKK) is disordered. The tr-type G domain occupies 364–533 (IRAPVVTIMG…LLQAEMLELK (170 aa)). A G1 region spans residues 373 to 380 (GHVDHGKT). 373 to 380 (GHVDHGKT) is a GTP binding site. Positions 398–402 (GITQN) are G2. A G3 region spans residues 419-422 (DTPG). GTP contacts are provided by residues 419–423 (DTPGH) and 473–476 (NKID). The interval 473 to 476 (NKID) is G4. Residues 509 to 511 (SAK) form a G5 region.

Belongs to the TRAFAC class translation factor GTPase superfamily. Classic translation factor GTPase family. IF-2 subfamily.

The protein resides in the cytoplasm. In terms of biological role, one of the essential components for the initiation of protein synthesis. Protects formylmethionyl-tRNA from spontaneous hydrolysis and promotes its binding to the 30S ribosomal subunits. Also involved in the hydrolysis of GTP during the formation of the 70S ribosomal complex. The sequence is that of Translation initiation factor IF-2 from Buchnera aphidicola subsp. Acyrthosiphon pisum (strain 5A).